The chain runs to 336 residues: UPF0324 membrane protein PM1461 (336 aa).

The next 10 helical transmembrane spans lie at 5–23 (TLFL…VNLL), 30–52 (LNAN…NTFY), 62–84 (GVIF…RLTL), 91–113 (GINA…LWLG), 123–140 (IVYL…AAIM), 153–175 (VSIA…PLMY), 221–238 (MIRV…SWLL), 250–271 (ISIP…FSLI), 275–297 (IVAW…LGLT), and 310–332 (PLIL…NVGI).

Belongs to the UPF0324 family.

It is found in the cell membrane. In Pasteurella multocida (strain Pm70), this protein is UPF0324 membrane protein PM1461.